The sequence spans 389 residues: Succinate--CoA ligase [ADP-forming] subunit beta (389 aa).

An ATP-grasp domain is found at 9 to 244 (KQLFADYGLP…ETQEDPREVE (236 aa)). ATP-binding positions include lysine 46, 53–55 (GRG), glutamate 99, glycine 102, and glutamate 107. Mg(2+) contacts are provided by asparagine 199 and aspartate 213. Residues asparagine 264 and 321 to 323 (GIV) contribute to the substrate site.

The protein belongs to the succinate/malate CoA ligase beta subunit family. As to quaternary structure, heterotetramer of two alpha and two beta subunits. Mg(2+) serves as cofactor.

It carries out the reaction succinate + ATP + CoA = succinyl-CoA + ADP + phosphate. It catalyses the reaction GTP + succinate + CoA = succinyl-CoA + GDP + phosphate. It functions in the pathway carbohydrate metabolism; tricarboxylic acid cycle; succinate from succinyl-CoA (ligase route): step 1/1. Succinyl-CoA synthetase functions in the citric acid cycle (TCA), coupling the hydrolysis of succinyl-CoA to the synthesis of either ATP or GTP and thus represents the only step of substrate-level phosphorylation in the TCA. The beta subunit provides nucleotide specificity of the enzyme and binds the substrate succinate, while the binding sites for coenzyme A and phosphate are found in the alpha subunit. The polypeptide is Succinate--CoA ligase [ADP-forming] subunit beta (Tolumonas auensis (strain DSM 9187 / NBRC 110442 / TA 4)).